The following is a 221-amino-acid chain: Mitochondrial cardiolipin hydrolase (221 aa).

Residues 1–4 lie on the Mitochondrial intermembrane side of the membrane; it reads MGRS. The segment at 1–38 is required for mitochondrial localization; it reads MGRSSWRLVFAAGAGLALALEALPWLMRWLLAGRRPRR. A helical membrane pass occupies residues 5–27; it reads SWRLVFAAGAGLALALEALPWLM. The Cytoplasmic portion of the chain corresponds to 28–221; it reads RWLLAGRRPR…SFFPQKHRGH (194 aa). The C3H1-type; atypical zinc finger occupies 44–75; that stretch reads PSQVTCTEALLQAPGLPPGPSGCPCSLPHSES. A PLD phosphodiesterase domain is found at 148–175; the sequence is DLGYMHHKFAIVDKKVLITGSLNWTTQA. Catalysis depends on residues histidine 153, lysine 155, and aspartate 160.

The protein belongs to the phospholipase D family. MitoPLD/Zucchini subfamily. As to quaternary structure, homodimer. Interacts with MOV10L1. Interacts with MIGA1 and MIGA2; possibly facilitating homodimer formation. Interacts with GK2. In terms of tissue distribution, predominantly expressed in testis (at protein level) and in growing ovary. Also expressed in the brain, eye and urinary bladder (at protein level), but its levels were low or undetectable in other organs.

The protein localises to the mitochondrion outer membrane. It is found in the nucleus membrane. Its subcellular location is the cell membrane. It localises to the golgi apparatus. The catalysed reaction is a cardiolipin + H2O = a 1,2-diacyl-sn-glycero-3-phospho-(1'-sn-glycerol) + a 1,2-diacyl-sn-glycero-3-phosphate + H(+). With respect to regulation, single stranded DNA (ssDNA) hydrolase activity does not depend upon, but is stimulated by the presence of Ca(2+) and Mn(2+). MIGA1 and MIGA2 increase PLD6 self-association affinity and affects the homodimer conformation facilitating its phospholipase activity over the nuclease activity. MYC induces its expression and stimulates its phospholipase activity. Presents phospholipase and nuclease activities, depending on the different physiological conditions. Interaction with Mitoguardin (MIGA1 or MIGA2) affects the dimer conformation, facilitating the lipase activity over the nuclease activity. Plays a key role in mitochondrial fusion and fission via its phospholipase activity. In its phospholipase role, it uses the mitochondrial lipid cardiolipin as substrate to generate phosphatidate (PA or 1,2-diacyl-sn-glycero-3-phosphate), a second messenger signaling lipid. Production of PA facilitates Mitofusin-mediated fusion, whereas the cleavage of PA by the Lipin family of phosphatases produces diacylgycerol (DAG) which promotes mitochondrial fission. Both Lipin and DAG regulate mitochondrial dynamics and membrane fusion/fission, important processes for adapting mitochondrial metabolism to changes in cell physiology. Mitochondrial fusion enables cells to cope with the increased nucleotide demand during DNA synthesis. Mitochondrial function and dynamics are closely associated with biological processes such as cell growth, proliferation, and differentiation. Mediator of MYC activity, promotes mitochondrial fusion and activates AMPK which in turn inhibits YAP/TAZ, thereby inducing cell growth and proliferation. The endonuclease activity plays a critical role in PIWI-interacting RNA (piRNA) biogenesis during spermatogenesis. Implicated in spermatogenesis and sperm fertility in testicular germ cells, its single strand-specific nuclease activity is critical for the biogenesis/maturation of PIWI-interacting RNA (piRNA). MOV10L1 selectively binds to piRNA precursors and funnels them to the endonuclease that catalyzes the first cleavage step of piRNA processing to generate piRNA intermediate fragments that are subsequently loaded to Piwi proteins. Cleaves either DNA or RNA substrates with similar affinity, producing a 5' phosphate end, in this way it participates in the processing of primary piRNA transcripts. piRNAs provide essential protection against the activity of mobile genetic elements. piRNA-mediated transposon silencing is thus critical for maintaining genome stability, in particular in germline cells when transposons are mobilized as a consequence of wide-spread genomic demethylation. PA may act as signaling molecule in the recognition/transport of the precursor RNAs of primary piRNAs. Interacts with tesmin in testes, suggesting a role in spermatogenesis via association with its interacting partner. The chain is Mitochondrial cardiolipin hydrolase (Pld6) from Mus musculus (Mouse).